A 1873-amino-acid polypeptide reads, in one-letter code: MEPSSPQDEGLRKKQPKKPVPEILPRPPRALFCLTLENPLRKACISIVEWKPFETIILLTIFANCVALAVYLPMPEDDNNSLNLGLEKLEYFFLIVFSIEAAMKIIAYGFLFHQDAYLRSGWNVLDFTIVFLGVFTVILEQVNVIQSHTAPMSSKGAGLDVKALRAFRVLRPLRLVSGVPSLQVVLNSIFKAMLPLFHIALLVLFMVIIYAIIGLELFKGKMHKTCYFIGTDIVATVENEEPSPCARTGSGRRCTINGSECRGGWPGPNHGITHFDNFGFSMLTVYQCITMEGWTDVLYWVNDAIGNEWPWIYFVTLILLGSFFILNLVLGVLSGEFTKEREKAKSRGTFQKLREKQQLDEDLRGYMSWITQGEVMDVEDFREGKLSLDEGGSDTESLYEIAGLNKIIQFIRHWRQWNRIFRWKCHDIVKSKVFYWLVILIVALNTLSIASEHHNQPLWLTRLQDIANRVLLSLFTTEMLMKMYGLGLRQYFMSIFNRFDCFVVCSGILEILLVESGAMTPLGISVLRCIRLLRIFKITKYWTSLSNLVASLLNSIRSIASLLLLLFLFIVIFALLGMQLFGGRYDFEDTEVRRSNFDNFPQALISVFQVLTGEDWTSMMYNGIMAYGGPSYPGMLVCIYFIILFVCGNYILLNVFLAIAVDNLAEAESLTSAQKAKAEEKKRRKMSKGLPDKSEEEKSTMAKKLEQKPKGEGIPTTAKLKIDEFESNVNEVKDPYPSADFPGDDEEDEPEIPLSPRPRPLAELQLKEKAVPIPEASSFFIFSPTNKIRVLCHRIVNATWFTNFILLFILLSSAALAAEDPIRADSMRNQILKHFDIGFTSVFTVEIVLKMTTYGAFLHKGSFCRNYFNMLDLLVVAVSLISMGLESSAISVVKILRVLRVLRPLRAINRAKGLKHVVQCMFVAISTIGNIVLVTTLLQFMFACIGVQLFKGKFFRCTDLSKMTEEECRGYYYVYKDGDPMQIELRHREWVHSDFHFDNVLSAMMSLFTVSTFEGWPQLLYKAIDSNAEDVGPIYNNRVEMAIFFIIYIILIAFFMMNIFVGFVIVTFQEQGETEYKNCELDKNQRQCVQYALKARPLRCYIPKNPYQYQVWYIVTSSYFEYLMFALIMLNTICLGMQHYNQSEQMNHISDILNVAFTIIFTLEMILKLMAFKARGYFGDPWNVFDFLIVIGSIIDVILSEIDTFLASSGGLYCLGGGCGNVDPDESARISSAFFRLFRVMRLIKLLSRAEGVRTLLWTFIKSFQALPYVALLIVMLFFIYAVIGMQMFGKIALVDGTQINRNNNFQTFPQAVLLLFRCATGEAWQEILLACSYGKLCDPESDYAPGEEYTCGTNFAYYYFISFYMLCAFLVINLFVAVIMDNFDYLTRDWSILGPHHLDEFKAIWAEYDPEAKGRIKHLDVVTLLRRIQPPLGFGKFCPHRVACKRLVGMNMPLNSDGTVTFNATLFALVRTALKIKTEGNFEQANEELRAIIKKIWKRTSMKLLDQVIPPIGDDEVTVGKFYATFLIQEHFRKFMKRQEEYYGYRPKKDIVQIQAGLRTIEEEAAPEICRTVSGDLAAEEELERAMVEAAMEEGIFRRTGGLFGQVDNFLERTNSLPPVMANQRPLQFAEIEMEEMESPVFLEDFPQDPRTNPLARANTNNANANVAYGNSNHSNSHVFSSVHYEREFPEETETPATRGRALGQPCRVLGPHSKPCVEMLKGLLTQRAMPRGQAPPAPCQCPRVESSMPEDRKSSTPGSLHEETPHSRSTRENTSRCSAPATALLIQKALVRGGLGTLAADANFIMATGQALADACQMEPEEVEIMATELLKGREAPEGMASSLGCLNLGSSLGSLDQHQGSQETLIPPRL.

The segment at 1-23 (MEPSSPQDEGLRKKQPKKPVPEI) is disordered. Topologically, residues 1–51 (MEPSSPQDEGLRKKQPKKPVPEILPRPPRALFCLTLENPLRKACISIVEWK) are cytoplasmic. One copy of the I repeat lies at 38 to 337 (NPLRKACISI…LVLGVLSGEF (300 aa)). A helical membrane pass occupies residues 52–70 (PFETIILLTIFANCVALAV). Residues 71–85 (YLPMPEDDNNSLNLG) are Extracellular-facing. N-linked (GlcNAc...) asparagine glycosylation occurs at Asn79. Residues 86–106 (LEKLEYFFLIVFSIEAAMKII) traverse the membrane as a helical segment. Topologically, residues 107–115 (AYGFLFHQD) are cytoplasmic. A helical transmembrane segment spans residues 116–136 (AYLRSGWNVLDFTIVFLGVFT). At 137–160 (VILEQVNVIQSHTAPMSSKGAGLD) the chain is on the extracellular side. Residues 161-179 (VKALRAFRVLRPLRLVSGV) form a helical membrane-spanning segment. The Cytoplasmic segment spans residues 180 to 196 (PSLQVVLNSIFKAMLPL). Residues 197-218 (FHIALLVLFMVIIYAIIGLELF) traverse the membrane as a helical segment. Topologically, residues 219 to 279 (KGKMHKTCYF…HGITHFDNFG (61 aa)) are extracellular. 2 disulfide bridges follow: Cys226–Cys254 and Cys245–Cys261. The N-linked (GlcNAc...) asparagine glycan is linked to Asn257. Residues 280-301 (FSMLTVYQCITMEGWTDVLYWV) constitute an intramembrane region (pore-forming). The Selectivity filter of repeat I signature appears at 290–293 (TMEG). Glu292 provides a ligand contact to Ca(2+). Residues 302-309 (NDAIGNEW) lie on the Extracellular side of the membrane. The helical transmembrane segment at 310-330 (PWIYFVTLILLGSFFILNLVL) threads the bilayer. The Cytoplasmic portion of the chain corresponds to 331-432 (GVLSGEFTKE…WKCHDIVKSK (102 aa)). The segment at 357 to 374 (QQLDEDLRGYMSWITQGE) is binding to the beta subunit. Residues Ser393 and Ser397 each carry the phosphoserine modification. The stretch at 418–664 (NRIFRWKCHD…VFLAIAVDNL (247 aa)) is one II repeat. A helical membrane pass occupies residues 433 to 451 (VFYWLVILIVALNTLSIAS). Over 452-462 (EHHNQPLWLTR) the chain is Extracellular. A helical transmembrane segment spans residues 463-483 (LQDIANRVLLSLFTTEMLMKM). The Cytoplasmic segment spans residues 484-494 (YGLGLRQYFMS). Residues 495 to 514 (IFNRFDCFVVCSGILEILLV) traverse the membrane as a helical segment. Over 515–523 (ESGAMTPLG) the chain is Extracellular. Residues 524–542 (ISVLRCIRLLRIFKITKYW) traverse the membrane as a helical segment. Residues 543 to 561 (TSLSNLVASLLNSIRSIAS) are Cytoplasmic-facing. Residues 562 to 581 (LLLLLFLFIVIFALLGMQLF) form a helical membrane-spanning segment. Residues 582–601 (GGRYDFEDTEVRRSNFDNFP) are Extracellular-facing. Residues 602–623 (QALISVFQVLTGEDWTSMMYNG) constitute an intramembrane region (pore-forming). The short motif at 612–615 (TGED) is the Selectivity filter of repeat II element. Glu614 contributes to the Ca(2+) binding site. The Extracellular segment spans residues 624–633 (IMAYGGPSYP). The helical transmembrane segment at 634-653 (GMLVCIYFIILFVCGNYILL) threads the bilayer. Residues 654-799 (NVFLAIAVDN…VLCHRIVNAT (146 aa)) are Cytoplasmic-facing. Disordered regions lie at residues 675–717 (KAKA…IPTT) and 731–757 (EVKDPYPSADFPGDDEEDEPEIPLSPR). At Ser687 the chain carries Phosphoserine; by PKA. Positions 690–711 (LPDKSEEEKSTMAKKLEQKPKG) are enriched in basic and acidic residues. The segment covering 742–751 (PGDDEEDEPE) has biased composition (acidic residues). Residues 747–760 (EDEPEIPLSPRPRP) are interaction with STAC, STAC2 and STAC3 (via SH3 domains). Residues 786 to 1068 (NKIRVLCHRI…IFVGFVIVTF (283 aa)) form an III repeat. A helical transmembrane segment spans residues 800 to 818 (WFTNFILLFILLSSAALAA). Topologically, residues 819–830 (EDPIRADSMRNQ) are extracellular. A helical membrane pass occupies residues 831–850 (ILKHFDIGFTSVFTVEIVLK). Topologically, residues 851 to 866 (MTTYGAFLHKGSFCRN) are cytoplasmic. A helical membrane pass occupies residues 867–885 (YFNMLDLLVVAVSLISMGL). Residues 886–892 (ESSAISV) lie on the Extracellular side of the membrane. A helical transmembrane segment spans residues 893–911 (VKILRVLRVLRPLRAINRA). Residues 912 to 930 (KGLKHVVQCMFVAISTIGN) lie on the Cytoplasmic side of the membrane. A helical membrane pass occupies residues 931-950 (IVLVTTLLQFMFACIGVQLF). The Extracellular segment spans residues 951–1000 (KGKFFRCTDLSKMTEEECRGYYYVYKDGDPMQIELRHREWVHSDFHFDNV). A disulfide bridge links Cys957 with Cys968. The interval 988–1077 (REWVHSDFHF…FQEQGETEYK (90 aa)) is dihydropyridine binding. An intramembrane region (pore-forming) is located at residues 1001–1021 (LSAMMSLFTVSTFEGWPQLLY). Positions 1012–1015 (TFEG) match the Selectivity filter of repeat III motif. Glu1014 contributes to the Ca(2+) binding site. Topologically, residues 1022–1038 (KAIDSNAEDVGPIYNNR) are extracellular. The chain crosses the membrane as a helical span at residues 1039-1060 (VEMAIFFIIYIILIAFFMMNIF). Topologically, residues 1061–1118 (VGFVIVTFQEQGETEYKNCELDKNQRQCVQYALKARPLRCYIPKNPYQYQVWYIVTSS) are cytoplasmic. One copy of the IV repeat lies at 1105–1384 (NPYQYQVWYI…LFVAVIMDNF (280 aa)). Residues 1119-1140 (YFEYLMFALIMLNTICLGMQHY) traverse the membrane as a helical segment. An N-linked (GlcNAc...) asparagine glycan is attached at Asn1141. Topologically, residues 1141–1148 (NQSEQMNH) are extracellular. The helical transmembrane segment at 1149-1170 (ISDILNVAFTIIFTLEMILKLM) threads the bilayer. Topologically, residues 1171 to 1180 (AFKARGYFGD) are cytoplasmic. A helical membrane pass occupies residues 1181–1200 (PWNVFDFLIVIGSIIDVILS). At 1201–1231 (EIDTFLASSGGLYCLGGGCGNVDPDESARIS) the chain is on the extracellular side. Residues 1232–1250 (SAFFRLFRVMRLIKLLSRA) form a helical membrane-spanning segment. The Cytoplasmic segment spans residues 1251 to 1268 (EGVRTLLWTFIKSFQALP). Residues 1269-1289 (YVALLIVMLFFIYAVIGMQMF) form a helical membrane-spanning segment. Residues 1290 to 1311 (GKIALVDGTQINRNNNFQTFPQ) are Extracellular-facing. An intramembrane region (pore-forming) is located at residues 1312–1330 (AVLLLFRCATGEAWQEILL). The short motif at 1321 to 1324 (TGEA) is the Selectivity filter of repeat IV element. Over 1331–1356 (ACSYGKLCDPESDYAPGEEYTCGTNF) the chain is Extracellular. Positions 1337-1403 (LCDPESDYAP…LGPHHLDEFK (67 aa)) are dihydropyridine binding. The cysteines at positions 1338 and 1352 are disulfide-linked. The segment at 1349-1391 (EYTCGTNFAYYYFISFYMLCAFLVINLFVAVIMDNFDYLTRDW) is phenylalkylamine binding. Residues 1357-1381 (AYYYFISFYMLCAFLVINLFVAVIM) traverse the membrane as a helical segment. Residues 1382–1873 (DNFDYLTRDW…SQETLIPPRL (492 aa)) lie on the Cytoplasmic side of the membrane. Residues 1522–1542 (KFYATFLIQEHFRKFMKRQEE) are interaction with calmodulin. Position 1575 is a phosphoserine; by PKA and CAMK2 (Ser1575). Ser1617 is subject to Phosphoserine; by PKA. The interval 1731-1780 (MPRGQAPPAPCQCPRVESSMPEDRKSSTPGSLHEETPHSRSTRENTSRCS) is disordered. Residues 1751–1776 (PEDRKSSTPGSLHEETPHSRSTRENT) show a composition bias toward basic and acidic residues.

It belongs to the calcium channel alpha-1 subunit (TC 1.A.1.11) family. CACNA1S subfamily. In terms of assembly, component of a calcium channel complex consisting of a pore-forming alpha subunit (CACNA1S) and the ancillary subunits CACNB1 or CACNB2, CACNG1 and CACNA2D1. The channel complex contains alpha, beta, gamma and delta subunits in a 1:1:1:1 ratio, i.e. it contains either CACNB1 or CACNB2. CACNA1S channel activity is modulated by the auxiliary subunits (CACNB1 or CACNB2, CACNG1 and CACNA2D1). Interacts with DYSF and JSRP1. Interacts with RYR1. Interacts with STAC, STAC2 and STAC3 (via their SH3 domains). Interacts with CALM. In terms of processing, the alpha-1S subunit is found in two isoforms in the skeletal muscle: a minor form of 212 kDa containing the complete amino acid sequence, and a major form of 190 kDa derived from the full-length form by post-translational proteolysis close to Phe-1690. Phosphorylated. Phosphorylation by PKA activates the calcium channel. Both the minor and major forms are phosphorylated in vitro by PKA. Phosphorylation at Ser-1575 is involved in beta-adrenergic-mediated regulation of the channel. As to expression, skeletal muscle specific.

The protein localises to the cell membrane. It is found in the sarcolemma. The protein resides in the T-tubule. It carries out the reaction Ca(2+)(in) = Ca(2+)(out). Its activity is regulated as follows. Channel activity is blocked by dihydropyridines (DHP), phenylalkylamines, and by benzothiazepines. Pore-forming, alpha-1S subunit of the voltage-gated calcium channel that gives rise to L-type calcium currents in skeletal muscle. Calcium channels containing the alpha-1S subunit play an important role in excitation-contraction coupling in skeletal muscle via their interaction with RYR1, which triggers Ca(2+) release from the sarcoplasmic reticulum and ultimately results in muscle contraction. Long-lasting (L-type) calcium channels belong to the 'high-voltage activated' (HVA) group. The protein is Voltage-dependent L-type calcium channel subunit alpha-1S (CACNA1S) of Homo sapiens (Human).